The chain runs to 190 residues: Tegument antigen (190 aa).

EF-hand domains follow at residues 8–43 (SQME…YRLD) and 51–77 (IARF…KVSE). Asp-55, Asp-57, Asp-59, Lys-61, and Glu-66 together coordinate Ca(2+).

In terms of tissue distribution, adult and schistosomula tegument.

This is Tegument antigen from Schistosoma mansoni (Blood fluke).